Consider the following 507-residue polypeptide: ATP synthase subunit alpha, plastid (507 aa).

Residue 170-177 (GDRQTGKT) participates in ATP binding.

This sequence belongs to the ATPase alpha/beta chains family. In terms of assembly, F-type ATPases have 2 components, CF(1) - the catalytic core - and CF(0) - the membrane proton channel. CF(1) has five subunits: alpha(3), beta(3), gamma(1), delta(1), epsilon(1). CF(0) has four main subunits: a, b, b' and c.

It is found in the plastid membrane. The enzyme catalyses ATP + H2O + 4 H(+)(in) = ADP + phosphate + 5 H(+)(out). Functionally, produces ATP from ADP in the presence of a proton gradient across the membrane. The alpha chain is a regulatory subunit. The chain is ATP synthase subunit alpha, plastid from Aneura mirabilis (Parasitic liverwort).